A 323-amino-acid chain; its full sequence is MRTATLYRYSVPMEAGVILRHQRLKSRDGLLVKLQQGELSGWGEIAPLPEFSQETLDQAQVAAECWLQHWVSGVESDDSVLPSVAFGLSCAQAELKQTLPLSADYRKAPLCTGDPDELFAVLQALPGEKVAKVKVGLYEAVRDGMIVNVLLEALPDLTLRLDANRSWSRAKADGFAKYVNPALRSRIAFLEEPCKTRAESREFAQDTGIAIAWDESVREADFQVEAEPGVAAIVIKPTLVGSLARCQQLVQQAHQAGLVAVISSSIESSLGLTQLARLAAWLTPATVPGLDTLDLMQAQVVRPWPDSPLPLITTEQLGVVWHR.

The active-site Proton donor is K134. Positions 162, 191, and 214 each coordinate Mg(2+). Catalysis depends on K236, which acts as the Proton acceptor.

The protein belongs to the mandelate racemase/muconate lactonizing enzyme family. MenC type 1 subfamily. Requires a divalent metal cation as cofactor.

It catalyses the reaction (1R,6R)-6-hydroxy-2-succinyl-cyclohexa-2,4-diene-1-carboxylate = 2-succinylbenzoate + H2O. It functions in the pathway quinol/quinone metabolism; 1,4-dihydroxy-2-naphthoate biosynthesis; 1,4-dihydroxy-2-naphthoate from chorismate: step 4/7. The protein operates within quinol/quinone metabolism; menaquinone biosynthesis. Functionally, converts 2-succinyl-6-hydroxy-2,4-cyclohexadiene-1-carboxylate (SHCHC) to 2-succinylbenzoate (OSB). This chain is o-succinylbenzoate synthase, found in Yersinia pseudotuberculosis serotype IB (strain PB1/+).